We begin with the raw amino-acid sequence, 195 residues long: Holliday junction branch migration complex subunit RuvA (195 aa).

Residues 1-66 (MNYLVFKVIY…LIIKDLYGFR (66 aa)) are domain I. Positions 67 to 141 (TYNERLLFID…KYINKVSEKN (75 aa)) are domain II. Position 141 (N141) is a region of interest, flexible linker. Positions 141–195 (NPWAKELSIGLENLGYDKKDIEYAITKVKVDTQQNIDISEIIGCAIKEISLRHEN) are domain III.

Belongs to the RuvA family. As to quaternary structure, homotetramer. Forms an RuvA(8)-RuvB(12)-Holliday junction (HJ) complex. HJ DNA is sandwiched between 2 RuvA tetramers; dsDNA enters through RuvA and exits via RuvB. An RuvB hexamer assembles on each DNA strand where it exits the tetramer. Each RuvB hexamer is contacted by two RuvA subunits (via domain III) on 2 adjacent RuvB subunits; this complex drives branch migration. In the full resolvosome a probable DNA-RuvA(4)-RuvB(12)-RuvC(2) complex forms which resolves the HJ.

It is found in the cytoplasm. Its function is as follows. The RuvA-RuvB-RuvC complex processes Holliday junction (HJ) DNA during genetic recombination and DNA repair, while the RuvA-RuvB complex plays an important role in the rescue of blocked DNA replication forks via replication fork reversal (RFR). RuvA specifically binds to HJ cruciform DNA, conferring on it an open structure. The RuvB hexamer acts as an ATP-dependent pump, pulling dsDNA into and through the RuvAB complex. HJ branch migration allows RuvC to scan DNA until it finds its consensus sequence, where it cleaves and resolves the cruciform DNA. This chain is Holliday junction branch migration complex subunit RuvA, found in Ureaplasma urealyticum serovar 10 (strain ATCC 33699 / Western).